The chain runs to 888 residues: Alanine--tRNA ligase (888 aa).

The Zn(2+) site is built by His564, His568, Cys676, and His680.

The protein belongs to the class-II aminoacyl-tRNA synthetase family. Zn(2+) is required as a cofactor.

It is found in the cytoplasm. It carries out the reaction tRNA(Ala) + L-alanine + ATP = L-alanyl-tRNA(Ala) + AMP + diphosphate. In terms of biological role, catalyzes the attachment of alanine to tRNA(Ala) in a two-step reaction: alanine is first activated by ATP to form Ala-AMP and then transferred to the acceptor end of tRNA(Ala). Also edits incorrectly charged Ser-tRNA(Ala) and Gly-tRNA(Ala) via its editing domain. In Mesorhizobium japonicum (strain LMG 29417 / CECT 9101 / MAFF 303099) (Mesorhizobium loti (strain MAFF 303099)), this protein is Alanine--tRNA ligase.